Here is a 511-residue protein sequence, read N- to C-terminus: Histidine ammonia-lyase (511 aa).

The segment at residues 142-144 is a cross-link (5-imidazolinone (Ala-Gly)); it reads ASG. Ser143 is modified (2,3-didehydroalanine (Ser)).

It belongs to the PAL/histidase family. In terms of processing, contains an active site 4-methylidene-imidazol-5-one (MIO), which is formed autocatalytically by cyclization and dehydration of residues Ala-Ser-Gly.

Its subcellular location is the cytoplasm. It catalyses the reaction L-histidine = trans-urocanate + NH4(+). Its pathway is amino-acid degradation; L-histidine degradation into L-glutamate; N-formimidoyl-L-glutamate from L-histidine: step 1/3. The sequence is that of Histidine ammonia-lyase from Brucella canis (strain ATCC 23365 / NCTC 10854 / RM-666).